The primary structure comprises 104 residues: Large ribosomal subunit protein uL24 (104 aa).

Belongs to the universal ribosomal protein uL24 family. In terms of assembly, part of the 50S ribosomal subunit.

Functionally, one of two assembly initiator proteins, it binds directly to the 5'-end of the 23S rRNA, where it nucleates assembly of the 50S subunit. Its function is as follows. One of the proteins that surrounds the polypeptide exit tunnel on the outside of the subunit. The polypeptide is Large ribosomal subunit protein uL24 (Corynebacterium kroppenstedtii (strain DSM 44385 / JCM 11950 / CIP 105744 / CCUG 35717)).